The sequence spans 695 residues: Elongation factor G (695 aa).

A tr-type G domain is found at D12–L286. GTP contacts are provided by residues A21–T28, D85–H89, and N139–D142.

It belongs to the TRAFAC class translation factor GTPase superfamily. Classic translation factor GTPase family. EF-G/EF-2 subfamily.

It is found in the cytoplasm. Its function is as follows. Catalyzes the GTP-dependent ribosomal translocation step during translation elongation. During this step, the ribosome changes from the pre-translocational (PRE) to the post-translocational (POST) state as the newly formed A-site-bound peptidyl-tRNA and P-site-bound deacylated tRNA move to the P and E sites, respectively. Catalyzes the coordinated movement of the two tRNA molecules, the mRNA and conformational changes in the ribosome. The polypeptide is Elongation factor G (Thermotoga sp. (strain RQ2)).